The following is a 548-amino-acid chain: GLC7-interacting protein 2 (548 aa).

The span at 1-23 shows a compositional bias: basic and acidic residues; the sequence is MYIKAEQKPQQFERKNEKLDRNK. 2 disordered regions span residues 1-54 and 118-143; these read MYIK…STEE and VESL…STVP. Position 51 is a phosphoserine (Ser51). Thr52 carries the phosphothreonine modification. Ser155 carries the phosphoserine modification. The segment at 191-212 is disordered; sequence RSKSLPTTPGIRSGNGVQARDG. 2 positions are modified to phosphoserine: Ser221 and Ser238. The interval 293–346 is disordered; sequence FAHPAKISNPNNGKGTNNTKLRKSKRFQNLLKNRTDMPPSKSNKKFVNGGGAHE. Residues 419–534 form the CBM21 domain; sequence HNGNDCNGVA…NNNGNNYKVD (116 aa).

In terms of assembly, interacts with phosphatase 1 (GLC7).

In Saccharomyces cerevisiae (strain ATCC 204508 / S288c) (Baker's yeast), this protein is GLC7-interacting protein 2 (GIP2).